The following is a 206-amino-acid chain: Small ribosomal subunit protein uS4 (206 aa).

Residues 96–156 (CRLDNVVYRM…EKAKNQLRIV (61 aa)) form the S4 RNA-binding domain.

Belongs to the universal ribosomal protein uS4 family. As to quaternary structure, part of the 30S ribosomal subunit. Contacts protein S5. The interaction surface between S4 and S5 is involved in control of translational fidelity.

Its function is as follows. One of the primary rRNA binding proteins, it binds directly to 16S rRNA where it nucleates assembly of the body of the 30S subunit. With S5 and S12 plays an important role in translational accuracy. The sequence is that of Small ribosomal subunit protein uS4 from Pseudomonas fluorescens (strain Pf0-1).